We begin with the raw amino-acid sequence, 338 residues long: N-acetyl-gamma-glutamyl-phosphate reductase (338 aa).

C148 is a catalytic residue.

This sequence belongs to the NAGSA dehydrogenase family. Type 1 subfamily.

The protein resides in the cytoplasm. The enzyme catalyses N-acetyl-L-glutamate 5-semialdehyde + phosphate + NADP(+) = N-acetyl-L-glutamyl 5-phosphate + NADPH + H(+). The protein operates within amino-acid biosynthesis; L-arginine biosynthesis; N(2)-acetyl-L-ornithine from L-glutamate: step 3/4. Functionally, catalyzes the NADPH-dependent reduction of N-acetyl-5-glutamyl phosphate to yield N-acetyl-L-glutamate 5-semialdehyde. In Leptospira interrogans serogroup Icterohaemorrhagiae serovar Lai (strain 56601), this protein is N-acetyl-gamma-glutamyl-phosphate reductase.